The sequence spans 882 residues: Alanine--tRNA ligase (882 aa).

Zn(2+)-binding residues include histidine 570, histidine 574, cysteine 672, and histidine 676.

Belongs to the class-II aminoacyl-tRNA synthetase family. Zn(2+) is required as a cofactor.

It is found in the cytoplasm. The catalysed reaction is tRNA(Ala) + L-alanine + ATP = L-alanyl-tRNA(Ala) + AMP + diphosphate. In terms of biological role, catalyzes the attachment of alanine to tRNA(Ala) in a two-step reaction: alanine is first activated by ATP to form Ala-AMP and then transferred to the acceptor end of tRNA(Ala). Also edits incorrectly charged Ser-tRNA(Ala) and Gly-tRNA(Ala) via its editing domain. The chain is Alanine--tRNA ligase from Xanthomonas campestris pv. campestris (strain 8004).